Reading from the N-terminus, the 80-residue chain is Exodeoxyribonuclease 7 small subunit (80 aa).

This sequence belongs to the XseB family. Heterooligomer composed of large and small subunits.

It is found in the cytoplasm. It carries out the reaction Exonucleolytic cleavage in either 5'- to 3'- or 3'- to 5'-direction to yield nucleoside 5'-phosphates.. Functionally, bidirectionally degrades single-stranded DNA into large acid-insoluble oligonucleotides, which are then degraded further into small acid-soluble oligonucleotides. The chain is Exodeoxyribonuclease 7 small subunit from Escherichia coli O6:K15:H31 (strain 536 / UPEC).